The primary structure comprises 331 residues: Centriolar satellite-associated tubulin polyglutamylase complex regulator 1 (331 aa).

The required for interaction with PCM1 stretch occupies residues 1 to 111 (MLSPERLALP…HCLLQLLCPD (111 aa)). The tract at residues 1 to 225 (MLSPERLALP…SCPPPALVKE (225 aa)) is required for interaction with TPGS1, LRRC49, and TTLL1. The tract at residues 112 to 331 (FPLELTQKAA…STEETDESET (220 aa)) is required for interaction with TPGS2. The tract at residues 292-331 (SCLPSRTPPRVGSPWKPLHRSRKLDAESDGSTEETDESET) is disordered. The segment covering 318-331 (ESDGSTEETDESET) has biased composition (acidic residues). A Phosphoserine modification is found at serine 319.

Belongs to the CSTPP1 family. As to quaternary structure, interacts with PCM1. Interacts with TTLL1, TPGS1, TPGS2 and LRRC49; the interactions link CSTPP1 to the complex TPGC. Binds to alpha-tubulin.

It localises to the cytoplasm. The protein localises to the cytoskeleton. The protein resides in the microtubule organizing center. It is found in the centrosome. Its subcellular location is the centriolar satellite. Its function is as follows. Regulator of the tubulin polyglutamylase complex (TPGC) that controls cytoskeletal organization, nuclear shape, and cilium disassembly by balancing microtubule and actin assembly. Regulates the assembly and stability of the TPGC and thereby modulates polyglutamylation of the microtubule, which antagonizes MAP4 binding. This Mus musculus (Mouse) protein is Centriolar satellite-associated tubulin polyglutamylase complex regulator 1.